Consider the following 390-residue polypeptide: Alkanesulfonate monooxygenase 1 (390 aa).

A disordered region spans residues 364-390; that stretch reads TGSSVNTGPFGETIAGDHRPKSLASAS.

The protein belongs to the SsuD family.

It catalyses the reaction an alkanesulfonate + FMNH2 + O2 = an aldehyde + FMN + sulfite + H2O + 2 H(+). Catalyzes the desulfonation of aliphatic sulfonates. The sequence is that of Alkanesulfonate monooxygenase 1 (ssuD1) from Mesorhizobium japonicum (strain LMG 29417 / CECT 9101 / MAFF 303099) (Mesorhizobium loti (strain MAFF 303099)).